Here is a 121-residue protein sequence, read N- to C-terminus: Large ribosomal subunit protein uL18 (121 aa).

Belongs to the universal ribosomal protein uL18 family. Part of the 50S ribosomal subunit; part of the 5S rRNA/L5/L18/L25 subcomplex. Contacts the 5S and 23S rRNAs.

In terms of biological role, this is one of the proteins that bind and probably mediate the attachment of the 5S RNA into the large ribosomal subunit, where it forms part of the central protuberance. In Buchnera aphidicola subsp. Baizongia pistaciae (strain Bp), this protein is Large ribosomal subunit protein uL18.